Consider the following 85-residue polypeptide: U4-theraphotoxin-Hhn1a (85 aa).

Positions 1 to 22 (MKVTLIAILTCATVLVLHTTAA) are cleaved as a signal peptide. Residues 23–48 (EELEAESQLMEVGMPDTELAAVDEER) constitute a propeptide that is removed on maturation. 3 cysteine pairs are disulfide-bonded: Cys52/Cys66, Cys56/Cys77, and Cys71/Cys82.

This sequence belongs to the neurotoxin 12 (Hwtx-2) family. 02 (Hwtx-2) subfamily. Monomer. In terms of tissue distribution, expressed by the venom gland.

It is found in the secreted. In terms of biological role, neurotoxin active on both insects and mammals. This chain is U4-theraphotoxin-Hhn1a, found in Cyriopagopus hainanus (Chinese bird spider).